Here is a 577-residue protein sequence, read N- to C-terminus: E3 ubiquitin-protein ligase MSL2 (577 aa).

A sufficient for interaction with MSL1 region spans residues 1–116; the sequence is MNPVNATALY…CEYITQTTLA (116 aa). Zn(2+)-binding residues include Cys44, Cys47, Cys62, His64, Cys67, Cys70, Cys81, and Cys84. The RING-type zinc finger occupies 44-85; sequence CCVCGHLLQDPIAPTNSTCQHYVCKTCKGKKMMMKPSCSWCK. Lys375 is covalently cross-linked (Glycyl lysine isopeptide (Lys-Gly) (interchain with G-Cter in SUMO2)). The segment at 405-427 is disordered; sequence TKSMKKSHEHGSKKSHSKTKPGI. Residues 407-423 show a composition bias toward basic residues; sequence SMKKSHEHGSKKSHSKT. Ser447 is subject to Phosphoserine. The region spanning 457-508 is the CXC MSL2-type domain; the sequence is QEKKGCKCGRATQNPSVLTCRGQRCPCYSNRKACLDCICRGCQNSYMANGEK. Residues Cys462, Cys464, Cys476, Cys481, Cys483, Cys490, Cys493, Cys495, and Cys498 each contribute to the Zn(2+) site.

Belongs to the MSL2 family. In terms of assembly, component of a multisubunit histone acetyltransferase complex (MSL) at least composed of the KAT8/MOF/MYST1, MSL1/hampin, MSL2 and MSL3. Forms a MSL heterotetrameric core with MSL1.

Its subcellular location is the nucleus. The protein resides in the chromosome. It carries out the reaction S-ubiquitinyl-[E2 ubiquitin-conjugating enzyme]-L-cysteine + [acceptor protein]-L-lysine = [E2 ubiquitin-conjugating enzyme]-L-cysteine + N(6)-ubiquitinyl-[acceptor protein]-L-lysine.. Its pathway is protein modification; protein ubiquitination. Functionally, non-catalytic component of the MSL histone acetyltransferase complex, a multiprotein complex that mediates the majority of histone H4 acetylation at 'Lys-16' (H4K16ac), an epigenetic mark that prevents chromatin compaction. The MSL complex is required for chromosome stability and genome integrity by maintaining homeostatic levels of H4K16ac. The MSL complex is also involved in gene dosage by promoting up-regulation of genes expressed by the X chromosome. X up-regulation is required to compensate for autosomal biallelic expression. The MSL complex also participates in gene dosage compensation by promoting expression of Tsix non-coding RNA. MSL2 plays a key role in gene dosage by ensuring biallelic expression of a subset of dosage-sensitive genes, including many haploinsufficient genes. Acts by promoting promoter-enhancer contacts, thereby preventing DNA methylation of one allele and creating a methylation-free environment for methylation-sensitive transcription factors such as SP1, KANSL1 and KANSL3. Also acts as an E3 ubiquitin ligase that promotes monoubiquitination of histone H2B at 'Lys-35' (H2BK34Ub), but not that of H2A. This activity is greatly enhanced by heterodimerization with MSL1. H2B ubiquitination in turn stimulates histone H3 methylation at 'Lys-4' (H3K4me) and 'Lys-79' (H3K79me) and leads to gene activation, including that of HOXA9 and MEIS1. Also involved in the DNA damage response by mediating ubiquitination of TP53/p53 and TP53BP1. This Homo sapiens (Human) protein is E3 ubiquitin-protein ligase MSL2.